Reading from the N-terminus, the 244-residue chain is MGLELYLDLLSQPSRAVYIFAKKNGIPFQTRTVDILKGQHMSEQFSQVNCLNKVPVLKDGSFVLTESTAILIYLSSKYQVADHWYPADLQARAQVHEYLGWHADNIRGTFGVLLWTKVLGPLIGVQVPQEKVERNRDRMVLVLQQLEDKFLRDRAFLVGQQVTLADLMSLEELMQPVALGYNLFEGRPQLTAWRERVEAFLGAELCQEAHSTILSILGQAAKKMLPVPPPEVHASMQLRIARIP.

A GST N-terminal domain is found at 2 to 82; that stretch reads GLELYLDLLS…YLSSKYQVAD (81 aa). Glutathione contacts are provided by residues 40 to 41, 53 to 54, 66 to 67, and 104 to 107; these read HM, KV, ES, and DNIR. The region spanning 88–230 is the GST C-terminal domain; that stretch reads DLQARAQVHE…AKKMLPVPPP (143 aa).

Belongs to the GST superfamily. Theta family. As to quaternary structure, homodimer. As to expression, in liver, highest expression found in central vein limiting plate hepatocytes. Also expressed in interlobular bile duct epithelial cells. In lung, expressed in club cells and ciliated cells of the bronchiolar epithelium and in type II alveolar cells of the lung parenchyma.

The protein resides in the cytoplasm. It localises to the cytosol. Its subcellular location is the nucleus. The enzyme catalyses RX + glutathione = an S-substituted glutathione + a halide anion + H(+). Conjugation of reduced glutathione to a wide number of exogenous and endogenous hydrophobic electrophiles. The chain is Glutathione S-transferase theta-2 from Mus musculus (Mouse).